Reading from the N-terminus, the 147-residue chain is Large ribosomal subunit protein uL15 (147 aa).

The disordered stretch occupies residues 1 to 58 (MKLHELKPAQGSTKAPKRLGRGIGSGTGKTSGKGHKGQKARAGGGVRPGFEGGQQPLA). Gly residues-rich tracts occupy residues 21–31 (RGIGSGTGKTS) and 42–52 (AGGGVRPGFEG).

The protein belongs to the universal ribosomal protein uL15 family. Part of the 50S ribosomal subunit.

Binds to the 23S rRNA. This Desulfitobacterium hafniense (strain Y51) protein is Large ribosomal subunit protein uL15.